Reading from the N-terminus, the 115-residue chain is Large ribosomal subunit protein uL22 (115 aa).

This sequence belongs to the universal ribosomal protein uL22 family. In terms of assembly, part of the 50S ribosomal subunit.

This protein binds specifically to 23S rRNA; its binding is stimulated by other ribosomal proteins, e.g. L4, L17, and L20. It is important during the early stages of 50S assembly. It makes multiple contacts with different domains of the 23S rRNA in the assembled 50S subunit and ribosome. In terms of biological role, the globular domain of the protein is located near the polypeptide exit tunnel on the outside of the subunit, while an extended beta-hairpin is found that lines the wall of the exit tunnel in the center of the 70S ribosome. The protein is Large ribosomal subunit protein uL22 of Streptomyces griseus subsp. griseus (strain JCM 4626 / CBS 651.72 / NBRC 13350 / KCC S-0626 / ISP 5235).